Reading from the N-terminus, the 1262-residue chain is SCL-interrupting locus protein homolog (1262 aa).

Residues 1-992 (MNTRFPSSKM…IDSPTKVKKN (992 aa)) form an interaction with RBM14 region. Positions 220 to 762 (YKHGYITMDE…VSMEAQSSPG (543 aa)) are interaction with CPAP. Disordered regions lie at residues 369–409 (RSSQ…QKIS), 454–551 (LCDA…LAPQ), and 650–670 (GGMGAYSPHSNGEPSPVAGPS). Polar residues-rich tracts occupy residues 473 to 493 (PTNQLSQDTALRQSRGKQSST), 500 to 512 (QFRNTNAKPSLSV), and 540 to 551 (TLDSRQPSLAPQ). The PIN1-binding stretch occupies residues 567–760 (PMELQVPTPS…ELVSMEAQSS (194 aa)). Serine 733 and serine 760 each carry phosphoserine. Disordered stretches follow at residues 782–804 (NAAGDDQEPDSQPKQDDTKISSE), 883–904 (APTEGASNSTELPQGTKDEPYR), 925–959 (NASQETEEPPTKAVVTNRECAKTQNTHHARKKRHN), and 1106–1129 (SSDNSEDEEEPPSHADSESDHVLN). The segment covering 792–803 (SQPKQDDTKISS) has biased composition (basic and acidic residues). Over residues 883-895 (APTEGASNSTELP) the composition is skewed to polar residues. Residues 949–959 (NTHHARKKRHN) show a composition bias toward basic residues. A Phosphoserine modification is found at serine 1110. Over residues 1116–1128 (PPSHADSESDHVL) the composition is skewed to basic and acidic residues.

In terms of assembly, homodimer. Interacts with PIN1 via its WW domain. This interaction is dependent on Stil mitotic phosphorylation. Interacts with CPAP. Interacts with RBM14 and this interaction interferes with the interaction of STIL with CPAP. Forms a complex with CPAP and SASS6. nteracts (via N-terminus) with CEP85; this interaction is essential for efficient centriolar targeting of STIL and subsequent PLK4 activation. Post-translationally, ubiquitinated. In terms of processing, phosphorylated following the activation of the mitotic checkpoint. In terms of tissue distribution, ubiquitously expressed in adult and fetal tissues. Highly expressed in hematopoietic tissues such as thymus, bone marrow and spleen.

Its subcellular location is the cytoplasm. The protein resides in the cytosol. The protein localises to the cytoskeleton. It localises to the microtubule organizing center. It is found in the centrosome. Its subcellular location is the centriole. The protein resides in the cell cortex. Immediate-early gene. Plays an important role in embryonic development as well as in cellular growth and proliferation; its long-term silencing affects cell survival and cell cycle distribution as well as decreases CDK1 activity correlated with reduced phosphorylation of CDK1. Plays a role as a positive regulator of the sonic hedgehog pathway, acting downstream of PTCH1. Plays an important role in the regulation of centriole duplication. Required for the onset of procentriole formation and proper mitotic progression. During procentriole formation, is essential for the correct loading of SASS6 and CPAP to the base of the procentriole to initiate procentriole assembly. In complex with STIL acts as a modulator of PLK4-driven cytoskeletal rearrangements and directional cell motility. The polypeptide is SCL-interrupting locus protein homolog (Stil) (Mus musculus (Mouse)).